The sequence spans 140 residues: Nucleoside diphosphate kinase (140 aa).

Residues Lys11, Phe59, Arg87, Thr93, Arg104, and Asn114 each contribute to the ATP site. His117 (pros-phosphohistidine intermediate) is an active-site residue.

The protein belongs to the NDK family. As to quaternary structure, homotetramer. Mg(2+) is required as a cofactor.

The protein resides in the cytoplasm. The enzyme catalyses a 2'-deoxyribonucleoside 5'-diphosphate + ATP = a 2'-deoxyribonucleoside 5'-triphosphate + ADP. It carries out the reaction a ribonucleoside 5'-diphosphate + ATP = a ribonucleoside 5'-triphosphate + ADP. Its function is as follows. Major role in the synthesis of nucleoside triphosphates other than ATP. The ATP gamma phosphate is transferred to the NDP beta phosphate via a ping-pong mechanism, using a phosphorylated active-site intermediate. The sequence is that of Nucleoside diphosphate kinase from Rhodopseudomonas palustris (strain BisB5).